A 316-amino-acid chain; its full sequence is Probable cell division protein WhiA (316 aa).

The H-T-H motif DNA-binding region spans 275 to 309 (TLKELGEMVSGGKISKSGINHRLRKIDEIAEKLRA).

This sequence belongs to the WhiA family.

Functionally, involved in cell division and chromosome segregation. This chain is Probable cell division protein WhiA, found in Bacillus mycoides (strain KBAB4) (Bacillus weihenstephanensis).